Reading from the N-terminus, the 31-residue chain is Conotoxin Cltx-2 (31 aa).

A 4-hydroxyproline mark is found at Pro-6 and Pro-31.

Contains 4 disulfide bonds. Expressed by the venom duct.

It localises to the secreted. The chain is Conotoxin Cltx-2 from Californiconus californicus (California cone).